Consider the following 1548-residue polypeptide: Dual oxidase 2 (1548 aa).

An N-terminal signal peptide occupies residues 1–25 (MLRARPEALMLLGALLTGSLGPSGN). Residues 26–601 (QDALSLPWEV…EGSSPGFAIT (576 aa)) are Extracellular-facing. The peroxidase-like; mediates peroxidase activity stretch occupies residues 30 to 596 (SLPWEVQRYD…VLDFFEGSSP (567 aa)). N-linked (GlcNAc...) asparagine glycans are attached at residues asparagine 100, asparagine 348, asparagine 382, asparagine 455, and asparagine 537. A disulfide bridge links cysteine 124 with cysteine 1162. Residues 602 to 622 (IIALCCLPLVSLLLSGVVAYF) form a helical membrane-spanning segment. At 623–1041 (RGREHKKLQK…KRFVENYRRH (419 aa)) the chain is on the cytoplasmic side. 3 EF-hand domains span residues 819 to 854 (PQDMFVESMFSLADKDGNGYLSFREFLDILVVFMKG), 855 to 890 (SPEDKSRLMFTMYDLDENGFLSKDEFFTMMRSFIEI), and 899 to 934 (QLAEVVESMFRESGFQDKEELTWEDFHFMLRDHDSE). Ca(2+) contacts are provided by aspartate 832, aspartate 834, asparagine 836, tyrosine 838, glutamate 843, aspartate 868, aspartate 870, asparagine 872, and glutamate 879. Positions 960 to 1245 (ISCRVSFITR…GSYALIQLPT (286 aa)) are interaction with TXNDC11. Positions 971-991 (PGERSHPQGLGPPAPEAPELG) are disordered. The helical transmembrane segment at 1042–1062 (IVCVAIFSAICVGVFADRAYY) threads the bilayer. The Extracellular portion of the chain corresponds to 1063–1076 (YGFASPPSDIAQTT). Residues 1077 to 1097 (LVGIILSRGTAASVSFMFSYI) form a helical membrane-spanning segment. Residues 1084-1266 (RGTAASVSFM…YGGDKLVSLS (183 aa)) form the Ferric oxidoreductase domain. The Cytoplasmic segment spans residues 1098 to 1128 (LLTMCRNLITFLRETFLNRYVPFDAAVDFHR). The helical transmembrane segment at 1129 to 1151 (WIAMAAVVLAILHSAGHAVNVYI) threads the bilayer. Topologically, residues 1152–1185 (FSVSPLSLLACIFPNVFVNDGSKLPQKFYWWFFQ) are extracellular. A helical membrane pass occupies residues 1186–1206 (TVPGMTGVLLLLVLAIMYVFA). Topologically, residues 1207 to 1223 (SHHFRRRSFRGFWLTHH) are cytoplasmic. 2 consecutive transmembrane segments (helical) span residues 1224-1244 (LYILLYALLIIHGSYALIQLP) and 1245-1265 (TFHIYFLVPAIIYGGDKLVSL). Over 1266–1548 (SRKKVEISVV…AHFMHHYENF (283 aa)) the chain is Cytoplasmic. The 107-residue stretch at 1267–1373 (RKKVEISVVK…DGPFGEGHQE (107 aa)) folds into the FAD-binding FR-type domain.

The protein in the N-terminal section; belongs to the peroxidase family. In terms of assembly, heterodimer with DUOXA2; disulfide-linked. Interacts with TXNDC11, TPO and CYBA. In terms of processing, N-glycosylated. In terms of tissue distribution, expressed in colon, small intestine, duodenum and tracheal surface epithelial cells (at protein level). Expressed in thyrocytes. Also detected in kidney, liver, lung, pancreas, prostate, salivary glands, rectum and testis.

The protein resides in the apical cell membrane. It is found in the cell junction. It catalyses the reaction NADH + O2 + H(+) = H2O2 + NAD(+). It carries out the reaction NADPH + O2 + H(+) = H2O2 + NADP(+). Its pathway is hormone biosynthesis; thyroid hormone biosynthesis. Its activity is regulated as follows. Peroxidase activity is inhibited by aminobenzohydrazide. The NADPH oxidase activity is calcium-dependent. Its function is as follows. Generates hydrogen peroxide which is required for the activity of thyroid peroxidase/TPO and lactoperoxidase/LPO. Plays a role in thyroid hormones synthesis and lactoperoxidase-mediated antimicrobial defense at the surface of mucosa. May have its own peroxidase activity through its N-terminal peroxidase-like domain. This Homo sapiens (Human) protein is Dual oxidase 2 (DUOX2).